Consider the following 57-residue polypeptide: MLKITLKKSLIGRRPNQVKTAHALGLRKIGQSVSKVENDAINGMINTIGHLVVVEKE.

This sequence belongs to the universal ribosomal protein uL30 family. Part of the 50S ribosomal subunit.

The polypeptide is Large ribosomal subunit protein uL30 (Acholeplasma laidlawii (strain PG-8A)).